A 326-amino-acid polypeptide reads, in one-letter code: Transcription initiation factor IIB (326 aa).

The TFIIB-type zinc finger occupies 26–57; sequence DVEVCPECGSPRLIRDYRRGEFICQDCGLVIE. Zn(2+) contacts are provided by Cys30, Cys33, Cys49, and Cys52. A run of 2 repeats spans residues 143-226 and 237-318.

This sequence belongs to the TFIIB family.

Its function is as follows. Stabilizes TBP binding to an archaeal box-A promoter. Also responsible for recruiting RNA polymerase II to the pre-initiation complex (DNA-TBP-TFIIB). The sequence is that of Transcription initiation factor IIB from Archaeoglobus fulgidus (strain ATCC 49558 / DSM 4304 / JCM 9628 / NBRC 100126 / VC-16).